Here is a 155-residue protein sequence, read N- to C-terminus: DNA gyrase inhibitor (155 aa).

This sequence belongs to the DNA gyrase inhibitor family. In terms of assembly, interacts with DNA gyrase.

Its subcellular location is the cytoplasm. Its function is as follows. Inhibits the supercoiling activity of DNA gyrase. Acts by inhibiting DNA gyrase at an early step, prior to (or at the step of) binding of DNA by the gyrase. It protects cells against toxins that target DNA gyrase, by inhibiting activity of these toxins and reducing the formation of lethal double-strand breaks in the cell. The polypeptide is DNA gyrase inhibitor (Edwardsiella piscicida).